Consider the following 865-residue polypeptide: Xylosyltransferase 2 (865 aa).

The Cytoplasmic portion of the chain corresponds to 1–15; sequence MVASARVQKLVRRYK. The helical; Signal-anchor for type II membrane protein transmembrane segment at 16-36 threads the bilayer; that stretch reads LAIATALAILLLQGLVVWSFS. The Lumenal portion of the chain corresponds to 37 to 865; the sequence is GLEEDEAGEK…GPVKADGRLR (829 aa). A disordered region spans residues 41–157; the sequence is DEAGEKGRQR…EGAPQPTDNG (117 aa). Residues 53-65 show a composition bias toward basic and acidic residues; sequence RPLDPGEGSKDTD. A compositionally biased stretch (basic residues) spans 73–82; sequence STGRRHGRWR. Asparagine 122 carries N-linked (GlcNAc...) asparagine glycosylation. Residues 125–137 are compositionally biased toward low complexity; the sequence is GAAAGEALVGAAG. Intrachain disulfides connect cysteine 162-cysteine 190, cysteine 206-cysteine 448, cysteine 467-cysteine 480, and cysteine 469-cysteine 478. UDP-alpha-D-xylose contacts are provided by residues valine 239, aspartate 267, and 296 to 298; that span reads TIW. A glycan (N-linked (GlcNAc...) asparagine) is linked at asparagine 327. Residue 400 to 401 coordinates UDP-alpha-D-xylose; that stretch reads DW. UDP-alpha-D-xylose contacts are provided by residues serine 481 and 504 to 505; that span reads RK. 2 cysteine pairs are disulfide-bonded: cysteine 581-cysteine 833 and cysteine 826-cysteine 839. The N-linked (GlcNAc...) asparagine glycan is linked to asparagine 683. The interval 846-865 is disordered; that stretch reads SLSPDPKSELGPVKADGRLR.

Belongs to the glycosyltransferase 14 family. XylT subfamily. Monomer. Mg(2+) is required as a cofactor. Requires Mn(2+) as cofactor. In terms of processing, contains disulfide bonds.

The protein localises to the golgi apparatus membrane. It is found in the secreted. The catalysed reaction is UDP-alpha-D-xylose + L-seryl-[protein] = 3-O-(beta-D-xylosyl)-L-seryl-[protein] + UDP + H(+). The protein operates within glycan metabolism; chondroitin sulfate biosynthesis. Its pathway is glycan metabolism; heparan sulfate biosynthesis. Catalyzes the first step in the biosynthesis of chondroitin sulfate, heparan sulfate and dermatan sulfate proteoglycans, such as DCN. Transfers D-xylose from UDP-D-xylose to specific serine residues of the core protein. The sequence is that of Xylosyltransferase 2 (XYLT2) from Pan troglodytes (Chimpanzee).